A 141-amino-acid polypeptide reads, in one-letter code: Large ribosomal subunit protein uL11 (141 aa).

It belongs to the universal ribosomal protein uL11 family. As to quaternary structure, part of the ribosomal stalk of the 50S ribosomal subunit. Interacts with L10 and the large rRNA to form the base of the stalk. L10 forms an elongated spine to which L12 dimers bind in a sequential fashion forming a multimeric L10(L12)X complex. Post-translationally, one or more lysine residues are methylated.

In terms of biological role, forms part of the ribosomal stalk which helps the ribosome interact with GTP-bound translation factors. The sequence is that of Large ribosomal subunit protein uL11 from Coprothermobacter proteolyticus (strain ATCC 35245 / DSM 5265 / OCM 4 / BT).